Consider the following 134-residue polypeptide: Phosphoribosyl-ATP pyrophosphatase (134 aa).

The protein belongs to the PRA-PH family.

The protein localises to the cytoplasm. It catalyses the reaction 1-(5-phospho-beta-D-ribosyl)-ATP + H2O = 1-(5-phospho-beta-D-ribosyl)-5'-AMP + diphosphate + H(+). It functions in the pathway amino-acid biosynthesis; L-histidine biosynthesis; L-histidine from 5-phospho-alpha-D-ribose 1-diphosphate: step 2/9. This Verminephrobacter eiseniae (strain EF01-2) protein is Phosphoribosyl-ATP pyrophosphatase.